The chain runs to 206 residues: Acidic proline-rich protein PRP33 (206 aa).

Residues 1-13 form the signal peptide; sequence MLVVLLTAALLVL. A disordered region spans residues 15–206; sequence SAHGSDEEVI…EQPSYLWFSS (192 aa). Residues 55 to 71 are compositionally biased toward acidic residues; sequence ENGDGDDSDDGDDDGSG. 6 tandem repeats follow at residues 80–97, 98–115, 116–133, 134–152, 153–170, and 171–189. Residues 80–189 are 6 X 18 AA approximate tandem repeats; it reads PPPHGGNHQR…RPPQPRKPQD (110 aa). Residues 103–112 are compositionally biased toward low complexity; that stretch reads GPQTSSQPGN. Over residues 113–174 the composition is skewed to pro residues; the sequence is PQGPPPQGGP…PGNPQGPPPQ (62 aa).

The protein localises to the secreted. Its function is as follows. May protect teeth by binding to tannins. The protein is Acidic proline-rich protein PRP33 (Prpg1) of Rattus norvegicus (Rat).